A 454-amino-acid chain; its full sequence is Noelin-2 (454 aa).

Residues 1-20 (MWPLTVPPPLLLLLCSGLAG) form the signal peptide. Coiled-coil stretches lie at residues 58–85 (RDGR…LELR) and 136–193 (LEQY…AQKL). N-linked (GlcNAc...) asparagine glycosylation is found at N74, N155, N275, N310, N399, and N441. The Olfactomedin-like domain maps to 194–446 (GCGKLTGVSN…QVLYNVTLFH (253 aa)). A disulfide bridge connects residues C195 and C377.

As to quaternary structure, peripherally associated with AMPAR complex. AMPAR complex consists of an inner core made of 4 pore-forming GluA/GRIA proteins (GRIA1, GRIA2, GRIA3 and GRIA4) and 4 major auxiliary subunits arranged in a twofold symmetry. One of the two pairs of distinct binding sites is occupied either by CNIH2, CNIH3 or CACNG2, CACNG3. The other harbors CACNG2, CACNG3, CACNG4, CACNG8 or GSG1L. This inner core of AMPAR complex is complemented by outer core constituents binding directly to the GluA/GRIA proteins at sites distinct from the interaction sites of the inner core constituents. Outer core constituents include at least PRRT1, PRRT2, CKAMP44/SHISA9, FRRS1L and NRN1. The proteins of the inner and outer core serve as a platform for other, more peripherally associated AMPAR constituents, including OLFM2. Alone or in combination, these auxiliary subunits control the gating and pharmacology of the AMPAR complex and profoundly impact their biogenesis and protein processing. Interacts with GRIA2. Interacts with OLFM1 and OLFM3. Interacts with SRF; the interaction promotes dissociation of SRF from the transcriptional repressor HEY2. Interacts with RUNX2. In terms of processing, N-glycosylated. As to expression, expressed in aortic smooth muscle (at protein level). In the fetus, expressed in the brain and ocular tissues including lens vesicle and optic cup.

The protein resides in the secreted. The protein localises to the synapse. It is found in the membrane. Its subcellular location is the nucleus. It localises to the cytoplasm. Its function is as follows. Involved in transforming growth factor beta (TGF-beta)-induced smooth muscle differentiation. TGF-beta induces expression and translocation of OLFM2 to the nucleus where it binds to SRF, causing its dissociation from the transcriptional repressor HEY2/HERP1 and facilitating binding of SRF to target genes. Plays a role in AMPAR complex organization. Is a regulator of vascular smooth-muscle cell (SMC) phenotypic switching, that acts by promoting RUNX2 and inhibiting MYOCD binding to SRF. SMC phenotypic switching is the process through which vascular SMCs undergo transition between a quiescent contractile phenotype and a proliferative synthetic phenotype in response to pathological stimuli. SMC phenotypic plasticity is essential for vascular development and remodeling. The chain is Noelin-2 (OLFM2) from Homo sapiens (Human).